Here is a 352-residue protein sequence, read N- to C-terminus: Holliday junction branch migration complex subunit RuvB (352 aa).

The large ATPase domain (RuvB-L) stretch occupies residues 5 to 191 (TDDFSEQRII…FGIVARLEFY (187 aa)). ATP is bound by residues L30, R31, G72, K75, T76, T77, 138 to 140 (EDY), R181, Y191, and R228. T76 contacts Mg(2+). Residues 192-262 (TPLELTKIVT…MADAALVMLD (71 aa)) form a small ATPAse domain (RuvB-S) region. Positions 265–352 (PVGFDLMDRK…GPNGDLWAGQ (88 aa)) are head domain (RuvB-H). Residues R301, R320, and R325 each contribute to the DNA site.

It belongs to the RuvB family. As to quaternary structure, homohexamer. Forms an RuvA(8)-RuvB(12)-Holliday junction (HJ) complex. HJ DNA is sandwiched between 2 RuvA tetramers; dsDNA enters through RuvA and exits via RuvB. An RuvB hexamer assembles on each DNA strand where it exits the tetramer. Each RuvB hexamer is contacted by two RuvA subunits (via domain III) on 2 adjacent RuvB subunits; this complex drives branch migration. In the full resolvosome a probable DNA-RuvA(4)-RuvB(12)-RuvC(2) complex forms which resolves the HJ.

The protein resides in the cytoplasm. The enzyme catalyses ATP + H2O = ADP + phosphate + H(+). The RuvA-RuvB-RuvC complex processes Holliday junction (HJ) DNA during genetic recombination and DNA repair, while the RuvA-RuvB complex plays an important role in the rescue of blocked DNA replication forks via replication fork reversal (RFR). RuvA specifically binds to HJ cruciform DNA, conferring on it an open structure. The RuvB hexamer acts as an ATP-dependent pump, pulling dsDNA into and through the RuvAB complex. RuvB forms 2 homohexamers on either side of HJ DNA bound by 1 or 2 RuvA tetramers; 4 subunits per hexamer contact DNA at a time. Coordinated motions by a converter formed by DNA-disengaged RuvB subunits stimulates ATP hydrolysis and nucleotide exchange. Immobilization of the converter enables RuvB to convert the ATP-contained energy into a lever motion, pulling 2 nucleotides of DNA out of the RuvA tetramer per ATP hydrolyzed, thus driving DNA branch migration. The RuvB motors rotate together with the DNA substrate, which together with the progressing nucleotide cycle form the mechanistic basis for DNA recombination by continuous HJ branch migration. Branch migration allows RuvC to scan DNA until it finds its consensus sequence, where it cleaves and resolves cruciform DNA. This is Holliday junction branch migration complex subunit RuvB from Janthinobacterium sp. (strain Marseille) (Minibacterium massiliensis).